The primary structure comprises 501 residues: ATP synthase subunit alpha (501 aa).

170–177 (GDRQTGKS) provides a ligand contact to ATP.

This sequence belongs to the ATPase alpha/beta chains family. F-type ATPases have 2 components, CF(1) - the catalytic core - and CF(0) - the membrane proton channel. CF(1) has five subunits: alpha(3), beta(3), gamma(1), delta(1), epsilon(1). CF(0) has three main subunits: a(1), b(2) and c(9-12). The alpha and beta chains form an alternating ring which encloses part of the gamma chain. CF(1) is attached to CF(0) by a central stalk formed by the gamma and epsilon chains, while a peripheral stalk is formed by the delta and b chains.

Its subcellular location is the cell membrane. The catalysed reaction is ATP + H2O + 4 H(+)(in) = ADP + phosphate + 5 H(+)(out). Its function is as follows. Produces ATP from ADP in the presence of a proton gradient across the membrane. The alpha chain is a regulatory subunit. This Acholeplasma laidlawii (strain PG-8A) protein is ATP synthase subunit alpha.